The sequence spans 109 residues: MTTSSYFLLVALGLLLYVCQSSFGNPHTRDSGTTPDRDHSCGGELVDRLVKLCPSNRKRRGFPSMLKARAKRNEAFLLQRDGRVIVGDCCDNYCTDERLKGYCASLLGL.

The signal sequence occupies residues Met1 to Gly24. Residues Asn25 to Arg29 constitute a propeptide that is removed on maturation. 3 disulfide bridges follow: Cys41-Cys90, Cys53-Cys103, and Cys89-Cys94. Glu44 is subject to 4-carboxyglutamate. A propeptide spans Arg57–Arg83 (c peptide).

The protein belongs to the insulin family. In terms of assembly, heterodimer of A and B chains; disulfide-linked. As to expression, expressed by the venom gland.

It is found in the secreted. Functionally, this venom insulin, from a fish-hunting cone snail, facilitates prey capture by rapidly inducing hypoglycemic shock. It is one of the smallest known insulin found in nature and lacks the C-terminal segment of the B chain that, in human insulin, mediates engagement of the insulin receptor (INSR) and assembly of the hormone's hexameric storage form. Despite lacking this segment, it both binds and activates human insulin receptor (long isoform (HIR-B)) with a moderate potency (EC(50)=373.2 nM). In vivo, intraperitoneal injection of this peptide into zebrafish lowers blood glucose with a lower potency than human insulin. In addition, when applied to water, this peptide reduces overall locomotor activity of zebrafish larvae, observed as a significant decrease in the percentage of time spent swimming and movement frequency. When tested on a mouse model of diabetes, this insulin also lowers blood glucose with a 20-fold lower potency than human insulin. This Conus kinoshitai (Kinoshita's cone) protein is Con-Ins K2.